Consider the following 260-residue polypeptide: Carbonic anhydrase 2 (260 aa).

N-acetylserine is present on S2. S2 bears the Phosphoserine mark. The 257-residue stretch at 3-259 folds into the Alpha-carbonic anhydrase domain; it reads HHWGYGKHNG…LKNRQVRGFP (257 aa). Residue H64 is the Proton donor/acceptor of the active site. Residues H94, H96, and H119 each coordinate Zn(2+). S165 and S172 each carry phosphoserine. 198-199 provides a ligand contact to substrate; it reads TT.

Belongs to the alpha-carbonic anhydrase family. As to quaternary structure, interacts with SLC4A4. Interaction with SLC4A7 regulates SLC4A7 transporter activity. Zn(2+) serves as cofactor.

It localises to the cytoplasm. It is found in the cell membrane. The enzyme catalyses hydrogencarbonate + H(+) = CO2 + H2O. It carries out the reaction urea = cyanamide + H2O. Inhibited by acetazolamide. In terms of biological role, catalyzes the reversible hydration of carbon dioxide. Can also hydrate cyanamide to urea. Involved in the regulation of fluid secretion into the anterior chamber of the eye. Essential for bone resorption and osteoclast differentiation. Contributes to intracellular pH regulation in the duodenal upper villous epithelium during proton-coupled peptide absorption. Stimulates the chloride-bicarbonate exchange activity of SLC26A6. This is Carbonic anhydrase 2 (CA2) from Bos taurus (Bovine).